The chain runs to 213 residues: Phospho-2-dehydro-3-deoxyheptonate aldolase, Tyr-sensitive (213 aa).

Belongs to the class-I DAHP synthase family.

It carries out the reaction D-erythrose 4-phosphate + phosphoenolpyruvate + H2O = 7-phospho-2-dehydro-3-deoxy-D-arabino-heptonate + phosphate. The protein operates within metabolic intermediate biosynthesis; chorismate biosynthesis; chorismate from D-erythrose 4-phosphate and phosphoenolpyruvate: step 1/7. Its function is as follows. Stereospecific condensation of phosphoenolpyruvate (PEP) and D-erythrose-4-phosphate (E4P) giving rise to 3-deoxy-D-arabino-heptulosonate-7-phosphate (DAHP). The polypeptide is Phospho-2-dehydro-3-deoxyheptonate aldolase, Tyr-sensitive (aroF) (Enterobacter agglomerans (Erwinia herbicola)).